The chain runs to 622 residues: Apical membrane antigen 1 (622 aa).

An N-terminal signal peptide occupies residues 1 to 24; it reads MRKLYCVLLLSAFEFTYMINFGRG. The Extracellular segment spans residues 25-546; the sequence is QNYWEHPYQK…EHKPTYDKMK (522 aa). 5 cysteine pairs are disulfide-bonded: cysteine 149–cysteine 302, cysteine 217–cysteine 247, cysteine 263–cysteine 275, cysteine 320–cysteine 418, and cysteine 337–cysteine 409. An N-linked (GlcNAc...) asparagine glycan is attached at asparagine 162. 5 N-linked (GlcNAc...) asparagine glycosylation sites follow: asparagine 286, asparagine 371, asparagine 421, asparagine 422, and asparagine 499. 3 disulfides stabilise this stretch: cysteine 443–cysteine 502, cysteine 490–cysteine 507, and cysteine 492–cysteine 509. Residues 547–567 traverse the membrane as a helical segment; the sequence is IIIASSAAVAVLATILMVYLY. Residues 568–622 lie on the Cytoplasmic side of the membrane; the sequence is KRKGNAEKYDKMDEPQHYGKSNSRNDEMLDPEASFWGEEKRASHTTPVLMEKPYY. Over residues 578 to 594 the composition is skewed to basic and acidic residues; the sequence is KMDEPQHYGKSNSRNDE. Positions 578–607 are disordered; that stretch reads KMDEPQHYGKSNSRNDEMLDPEASFWGEEK.

Belongs to the apicomplexan parasites AMA1 family.

It is found in the membrane. In terms of biological role, involved in parasite invasion of erythrocytes. This chain is Apical membrane antigen 1 (AMA-1), found in Plasmodium falciparum (isolate FC27 / Papua New Guinea).